The chain runs to 346 residues: tRNA N6-adenosine threonylcarbamoyltransferase (346 aa).

Positions 111 and 115 each coordinate Fe cation. Residues 134–138, aspartate 167, glycine 180, and asparagine 279 contribute to the substrate site; that span reads LVSGG. Aspartate 307 provides a ligand contact to Fe cation.

Belongs to the KAE1 / TsaD family. The cofactor is Fe(2+).

Its subcellular location is the cytoplasm. The catalysed reaction is L-threonylcarbamoyladenylate + adenosine(37) in tRNA = N(6)-L-threonylcarbamoyladenosine(37) in tRNA + AMP + H(+). Functionally, required for the formation of a threonylcarbamoyl group on adenosine at position 37 (t(6)A37) in tRNAs that read codons beginning with adenine. Is involved in the transfer of the threonylcarbamoyl moiety of threonylcarbamoyl-AMP (TC-AMP) to the N6 group of A37, together with TsaE and TsaB. TsaD likely plays a direct catalytic role in this reaction. The sequence is that of tRNA N6-adenosine threonylcarbamoyltransferase from Burkholderia lata (strain ATCC 17760 / DSM 23089 / LMG 22485 / NCIMB 9086 / R18194 / 383).